Reading from the N-terminus, the 460-residue chain is 1-aminocyclopropane-1-carboxylate synthase 11 (460 aa).

Substrate-binding residues include Glu-45 and Tyr-83. Lys-267 is subject to N6-(pyridoxal phosphate)lysine.

This sequence belongs to the class-I pyridoxal-phosphate-dependent aminotransferase family. As to quaternary structure, homodimer and heterodimer. In vivo, the relevance of heterodimerization with other ACS enzymes is however unsure. Interacts with GRF3. Pyridoxal 5'-phosphate is required as a cofactor. May be processed at its C-terminus. In terms of tissue distribution, expressed in roots.

The catalysed reaction is S-adenosyl-L-methionine = 1-aminocyclopropane-1-carboxylate + S-methyl-5'-thioadenosine + H(+). It functions in the pathway alkene biosynthesis; ethylene biosynthesis via S-adenosyl-L-methionine; ethylene from S-adenosyl-L-methionine: step 1/2. Its function is as follows. 1-aminocyclopropane-1-carboxylate synthase (ACS) enzymes catalyze the conversion of S-adenosyl-L-methionine (SAM) into 1-aminocyclopropane-1-carboxylate (ACC), a direct precursor of ethylene. The sequence is that of 1-aminocyclopropane-1-carboxylate synthase 11 (ACS11) from Arabidopsis thaliana (Mouse-ear cress).